The chain runs to 177 residues: ATP synthase subunit delta (177 aa).

Belongs to the ATPase delta chain family. As to quaternary structure, F-type ATPases have 2 components, F(1) - the catalytic core - and F(0) - the membrane proton channel. F(1) has five subunits: alpha(3), beta(3), gamma(1), delta(1), epsilon(1). F(0) has three main subunits: a(1), b(2) and c(10-14). The alpha and beta chains form an alternating ring which encloses part of the gamma chain. F(1) is attached to F(0) by a central stalk formed by the gamma and epsilon chains, while a peripheral stalk is formed by the delta and b chains.

It is found in the cell membrane. In terms of biological role, f(1)F(0) ATP synthase produces ATP from ADP in the presence of a proton or sodium gradient. F-type ATPases consist of two structural domains, F(1) containing the extramembraneous catalytic core and F(0) containing the membrane proton channel, linked together by a central stalk and a peripheral stalk. During catalysis, ATP synthesis in the catalytic domain of F(1) is coupled via a rotary mechanism of the central stalk subunits to proton translocation. This protein is part of the stalk that links CF(0) to CF(1). It either transmits conformational changes from CF(0) to CF(1) or is implicated in proton conduction. The protein is ATP synthase subunit delta of Exiguobacterium sibiricum (strain DSM 17290 / CCUG 55495 / CIP 109462 / JCM 13490 / 255-15).